A 1493-amino-acid chain; its full sequence is Son of sevenless homolog (1493 aa).

One can recognise a DH domain in the interval 244–448 (TYESVAVDFL…ERVVGCVSDM (205 aa)). Residues 496–606 (ELEKDGDLGM…WMAVLVKVTT (111 aa)) form the PH domain. One can recognise an N-terminal Ras-GEF domain in the interval 656–824 (GIPVIKCGTV…TILALIEKRV (169 aa)). Positions 897-1164 (HPIEIGRQLT…YNKSLEIQPK (268 aa)) constitute a Ras-GEF domain. 3 disordered regions span residues 1067-1091 (KSPP…DPEN), 1165-1248 (GLDT…DDAP), and 1263-1493 (HPKI…SSNK). Basic and acidic residues predominate over residues 1079-1088 (QQKDDLKASD). Polar residues-rich tracts occupy residues 1208–1231 (HSQN…NTPL) and 1279–1289 (SRANQSNSVSL). Low complexity predominate over residues 1308-1326 (STATSPTTLTTTTTPSSAG). The segment covering 1350-1361 (LTPSRDNSSPSA) has biased composition (polar residues). The span at 1381–1400 (STSSDVSSSPSTSGSTSSAT) shows a compositional bias: low complexity. The span at 1402–1417 (ENQEQLRVIFDREESH) shows a compositional bias: basic and acidic residues. The span at 1426-1435 (PLPPALPPPR) shows a compositional bias: pro residues. A compositionally biased stretch (polar residues) spans 1453-1464 (HNSNSPTLSSEQ).

In terms of assembly, interacts with cmd-1 in the presence of Ca(2+).

In terms of biological role, promotes the exchange of Ras-bound GDP by GTP. May regulate signaling pathways downstream of receptor tyrosine kinase, egl-15 and let-23. Required for larval and male spicule development, fluid homeostasis, vulva induction, spermatogenesis, and oogenesis by promoting meiosis prophase exit during oocyte maturation. Required for the delamination of G1 cell by promoting the loss of cell junctions and detachment from the excretory system during larval development. Plays a role in nicotinic acetylcholine receptor (nAChR)-mediated sensitivity to nicotine. Regulates synaptic levels of nAchR subunit lev-1 in the nerve cord. The polypeptide is Son of sevenless homolog (Caenorhabditis elegans).